The following is a 461-amino-acid chain: Fibrinogen C domain-containing protein 1 (461 aa).

The interval 1–24 is disordered; sequence MVNDRWKTMGGAAQLEDRPRDKPQ. The Cytoplasmic portion of the chain corresponds to 1–33; that stretch reads MVNDRWKTMGGAAQLEDRPRDKPQRPSCGYVLC. The segment covering 15–24 has biased composition (basic and acidic residues); the sequence is LEDRPRDKPQ. The chain crosses the membrane as a helical; Signal-anchor for type II membrane protein span at residues 34–54; the sequence is TVLLALAVLLAVAVTGAVLFL. Topologically, residues 55–461 are extracellular; the sequence is NHAHAPGTAP…MKIRPVREDR (407 aa). The disordered stretch occupies residues 214–238; that stretch reads GRPRNKADLQRAPARGTRPRGCATG. Positions 235-458 constitute a Fibrinogen C-terminal domain; sequence CATGSRPRDC…FSEMKIRPVR (224 aa). C244 and C273 are oxidised to a cystine. N340 carries N-linked (GlcNAc...) asparagine glycosylation. Positions 393 and 395 each coordinate Ca(2+). C401 and C414 are disulfide-bonded.

Homotetramer; disulfide-linked. Expressed in the small and large intestinal epithelial cells with a highly polarized localization to the apical surface corresponding to the brush border and in the ducts of the salivary gland.

The protein localises to the membrane. Its function is as follows. Acetyl group-binding receptor which shows a high-affinity and calcium-dependent binding to acetylated structures such as chitin, some N-acetylated carbohydrates, and amino acids, but not to their non-acetylated counterparts. Can facilitate the endocytosis of acetylated components. The chain is Fibrinogen C domain-containing protein 1 (FIBCD1) from Homo sapiens (Human).